Reading from the N-terminus, the 283-residue chain is Bifunctional protein FolD (283 aa).

NADP(+)-binding positions include 164–166 (GRS) and S189.

Belongs to the tetrahydrofolate dehydrogenase/cyclohydrolase family. Homodimer.

The enzyme catalyses (6R)-5,10-methylene-5,6,7,8-tetrahydrofolate + NADP(+) = (6R)-5,10-methenyltetrahydrofolate + NADPH. It catalyses the reaction (6R)-5,10-methenyltetrahydrofolate + H2O = (6R)-10-formyltetrahydrofolate + H(+). It functions in the pathway one-carbon metabolism; tetrahydrofolate interconversion. Its function is as follows. Catalyzes the oxidation of 5,10-methylenetetrahydrofolate to 5,10-methenyltetrahydrofolate and then the hydrolysis of 5,10-methenyltetrahydrofolate to 10-formyltetrahydrofolate. This chain is Bifunctional protein FolD, found in Lactobacillus acidophilus (strain ATCC 700396 / NCK56 / N2 / NCFM).